The primary structure comprises 148 residues: uncharacterized protein (148 aa).

Residues 1 to 108 are disordered; it reads MGRAGPRSTA…PSRLRGKRSL (108 aa). Residues 22 to 42 show a composition bias toward basic residues; it reads RRPRPWQKPTSPRRLHRRRPR. Over residues 88–97 the composition is skewed to polar residues; the sequence is DTSASNPSQR.

This is an uncharacterized protein from Homo sapiens (Human).